The following is a 300-amino-acid chain: Jacalin-related lectin 32 (300 aa).

A2 is subject to N-acetylalanine. Jacalin-type lectin domains follow at residues 2-146 (AQKV…YFTT) and 154-297 (AKKL…HILP).

This sequence belongs to the jacalin lectin family.

Functionally, involved in gametophytic development. The polypeptide is Jacalin-related lectin 32 (JAL32) (Arabidopsis thaliana (Mouse-ear cress)).